The following is a 346-amino-acid chain: ATP-dependent 6-phosphofructokinase (346 aa).

ATP-binding positions include glycine 13, 76–77 (RL), and 106–109 (GEGT). Glutamate 107 contributes to the Mg(2+) binding site. Residues 129-131 (TID), arginine 166, 173-175 (MGR), glutamate 226, arginine 270, and 276-279 (HIQR) contribute to the substrate site. Catalysis depends on aspartate 131, which acts as the Proton acceptor.

Belongs to the phosphofructokinase type A (PFKA) family. Mixed-substrate PFK group III subfamily. In terms of assembly, homodimer or homotetramer. The cofactor is Mg(2+).

The protein resides in the cytoplasm. It catalyses the reaction beta-D-fructose 6-phosphate + ATP = beta-D-fructose 1,6-bisphosphate + ADP + H(+). The protein operates within carbohydrate degradation; glycolysis; D-glyceraldehyde 3-phosphate and glycerone phosphate from D-glucose: step 3/4. Catalyzes the phosphorylation of D-fructose 6-phosphate to fructose 1,6-bisphosphate by ATP, the first committing step of glycolysis. This is ATP-dependent 6-phosphofructokinase from Corynebacterium efficiens (strain DSM 44549 / YS-314 / AJ 12310 / JCM 11189 / NBRC 100395).